Consider the following 237-residue polypeptide: Trypsin-1 (237 aa).

Positions 1-237 (IVGGTDAVLG…HVDWIKANAV (237 aa)) constitute a Peptidase S1 domain. A disulfide bridge connects residues Cys30 and Cys46. His45 functions as the Charge relay system in the catalytic mechanism. Ca(2+) contacts are provided by Glu64, Val69, and Glu74. The Charge relay system role is filled by Asp96. 2 disulfides stabilise this stretch: Cys159/Cys174 and Cys185/Cys213. Catalysis depends on Ser189, which acts as the Charge relay system.

The protein belongs to the peptidase S1 family. Ca(2+) serves as cofactor.

Its subcellular location is the secreted. The protein localises to the extracellular space. It carries out the reaction Preferential cleavage: Arg-|-Xaa, Lys-|-Xaa.. In Astacus astacus (Noble crayfish), this protein is Trypsin-1.